A 586-amino-acid polypeptide reads, in one-letter code: Maltogenic alpha-amylase (586 aa).

Residues asparagine 147, asparagine 152, aspartate 153, glycine 172, and aspartate 174 each coordinate Ca(2+). Substrate-binding residues include histidine 247 and arginine 326. Aspartate 328 serves as the catalytic Nucleophile. The active-site Proton donor is the glutamate 357. Residues 423-424, aspartate 468, and arginine 472 contribute to the substrate site; that span reads HD.

This sequence belongs to the glycosyl hydrolase 13 family. The cofactor is Ca(2+).

The enzyme catalyses hydrolysis of (1-&gt;4)-alpha-D-glucosidic linkages in polysaccharides so as to remove successive alpha-maltose residues from the non-reducing ends of the chains.. Its function is as follows. Converts starch into maltose. The polypeptide is Maltogenic alpha-amylase (Bacillus acidopullulyticus).